The chain runs to 357 residues: UDP-N-acetylglucosamine--N-acetylmuramyl-(pentapeptide) pyrophosphoryl-undecaprenol N-acetylglucosamine transferase (357 aa).

Residues 13-15, Asn122, Arg163, Ser191, and Gln288 each bind UDP-N-acetyl-alpha-D-glucosamine; that span reads TGG.

Belongs to the glycosyltransferase 28 family. MurG subfamily.

It is found in the cell inner membrane. The catalysed reaction is di-trans,octa-cis-undecaprenyl diphospho-N-acetyl-alpha-D-muramoyl-L-alanyl-D-glutamyl-meso-2,6-diaminopimeloyl-D-alanyl-D-alanine + UDP-N-acetyl-alpha-D-glucosamine = di-trans,octa-cis-undecaprenyl diphospho-[N-acetyl-alpha-D-glucosaminyl-(1-&gt;4)]-N-acetyl-alpha-D-muramoyl-L-alanyl-D-glutamyl-meso-2,6-diaminopimeloyl-D-alanyl-D-alanine + UDP + H(+). The protein operates within cell wall biogenesis; peptidoglycan biosynthesis. Functionally, cell wall formation. Catalyzes the transfer of a GlcNAc subunit on undecaprenyl-pyrophosphoryl-MurNAc-pentapeptide (lipid intermediate I) to form undecaprenyl-pyrophosphoryl-MurNAc-(pentapeptide)GlcNAc (lipid intermediate II). The protein is UDP-N-acetylglucosamine--N-acetylmuramyl-(pentapeptide) pyrophosphoryl-undecaprenol N-acetylglucosamine transferase of Gloeobacter violaceus (strain ATCC 29082 / PCC 7421).